The chain runs to 61 residues: Photosystem II reaction center protein K (61 aa).

The propeptide occupies 1-24; it reads MLNTFSLIGICLNSTLFSSSFFFG. The helical transmembrane segment at 36–56 threads the bilayer; that stretch reads IVDIMPVIPLFFFLLAFVWQA.

This sequence belongs to the PsbK family. In terms of assembly, PSII is composed of 1 copy each of membrane proteins PsbA, PsbB, PsbC, PsbD, PsbE, PsbF, PsbH, PsbI, PsbJ, PsbK, PsbL, PsbM, PsbT, PsbX, PsbY, PsbZ, Psb30/Ycf12, at least 3 peripheral proteins of the oxygen-evolving complex and a large number of cofactors. It forms dimeric complexes.

Its subcellular location is the plastid. The protein resides in the chloroplast thylakoid membrane. In terms of biological role, one of the components of the core complex of photosystem II (PSII). PSII is a light-driven water:plastoquinone oxidoreductase that uses light energy to abstract electrons from H(2)O, generating O(2) and a proton gradient subsequently used for ATP formation. It consists of a core antenna complex that captures photons, and an electron transfer chain that converts photonic excitation into a charge separation. This chain is Photosystem II reaction center protein K, found in Nicotiana tomentosiformis (Tobacco).